The sequence spans 445 residues: Phosphoglucosamine mutase (445 aa).

Ser-102 (phosphoserine intermediate) is an active-site residue. 4 residues coordinate Mg(2+): Ser-102, Asp-241, Asp-243, and Asp-245. The residue at position 102 (Ser-102) is a Phosphoserine.

It belongs to the phosphohexose mutase family. It depends on Mg(2+) as a cofactor. Post-translationally, activated by phosphorylation.

The catalysed reaction is alpha-D-glucosamine 1-phosphate = D-glucosamine 6-phosphate. Its function is as follows. Catalyzes the conversion of glucosamine-6-phosphate to glucosamine-1-phosphate. The protein is Phosphoglucosamine mutase of Acinetobacter baumannii (strain SDF).